Here is a 429-residue protein sequence, read N- to C-terminus: MRFLDIRDTNFDAEFAAILARGEETGREVEQVVLDIIADVRARGDEALLEYTRRFDRLEADSVAALQVTEDEIEYAFAKVKDEEIAALKLAVERVARFHEKQKQETWLSTTEPDILLGQMVTPLERVGIYVPGGKASYPSSVIMNAVPARVAGVGEIVMVAPTPGGEINPHVLVAARLSGVDRIFRMGGAQAVAALAYGTATVPRVDKITGPGNIYVATAKKLVFGQVGIDMIAGPSEILVINDGSGTPAHIAADLLSQAEHDELASSILITTDRGFGEQVATEVERQLAQLSRETIARTSWETYGAVIVAGSLDEAIAFSNRIAPEHLELAVANPFEILPRIKNAGAIFLGHFTPEAAGDYLAGPNHTLPTGGTARFFSPLSVDDFVKKSSIVYFSAAGLNRLGRDIVSIAEMEGLEAHGRSVSIRLK.

NAD(+) contacts are provided by tyrosine 130, glutamine 191, and asparagine 214. Serine 237, glutamine 259, and histidine 262 together coordinate substrate. Residues glutamine 259 and histidine 262 each coordinate Zn(2+). Catalysis depends on proton acceptor residues glutamate 327 and histidine 328. Substrate-binding residues include histidine 328, aspartate 361, glutamate 415, and histidine 420. Aspartate 361 is a Zn(2+) binding site. Residue histidine 420 coordinates Zn(2+).

This sequence belongs to the histidinol dehydrogenase family. Requires Zn(2+) as cofactor.

The enzyme catalyses L-histidinol + 2 NAD(+) + H2O = L-histidine + 2 NADH + 3 H(+). Its pathway is amino-acid biosynthesis; L-histidine biosynthesis; L-histidine from 5-phospho-alpha-D-ribose 1-diphosphate: step 9/9. Catalyzes the sequential NAD-dependent oxidations of L-histidinol to L-histidinaldehyde and then to L-histidine. In Geobacter sulfurreducens (strain ATCC 51573 / DSM 12127 / PCA), this protein is Histidinol dehydrogenase.